The primary structure comprises 146 residues: uncharacterized protein (146 aa).

Disordered stretches follow at residues 1–33 (MATFHRAHATSSVKPRARRHQEPNSGDWPGSYR) and 50–70 (QHWRPRSLGAGQGREDPSWEG).

This is an uncharacterized protein from Homo sapiens (Human).